The following is a 397-amino-acid chain: Elongation factor Tu (397 aa).

Residues 10–207 enclose the tr-type G domain; the sequence is KPHVNIGTIG…AVDESIPEPV (198 aa). Residues 19–26 form a G1 region; the sequence is GHVDHGKT. Residue 19 to 26 participates in GTP binding; it reads GHVDHGKT. Thr-26 lines the Mg(2+) pocket. Residues 63 to 67 form a G2 region; the sequence is GITIN. The tract at residues 84–87 is G3; the sequence is DAPG. GTP-binding positions include 84 to 88 and 139 to 142; these read DAPGH and NKSD. The tract at residues 139-142 is G4; that stretch reads NKSD. Positions 177 to 179 are G5; sequence SGL.

The protein belongs to the TRAFAC class translation factor GTPase superfamily. Classic translation factor GTPase family. EF-Tu/EF-1A subfamily. Monomer.

Its subcellular location is the cytoplasm. The enzyme catalyses GTP + H2O = GDP + phosphate + H(+). In terms of biological role, GTP hydrolase that promotes the GTP-dependent binding of aminoacyl-tRNA to the A-site of ribosomes during protein biosynthesis. The chain is Elongation factor Tu from Clavibacter michiganensis subsp. michiganensis (strain NCPPB 382).